The sequence spans 206 residues: 2,3-bisphosphoglycerate-dependent phosphoglycerate mutase (206 aa).

Substrate-binding positions include 9–16 (RHGQSEWN), 22–23 (TG), R61, 88–91 (ERDY), K99, 115–116 (RR), and 159–160 (GN). The active-site Tele-phosphohistidine intermediate is the H10. The active-site Proton donor/acceptor is the E88.

Belongs to the phosphoglycerate mutase family. BPG-dependent PGAM subfamily. Homodimer.

It catalyses the reaction (2R)-2-phosphoglycerate = (2R)-3-phosphoglycerate. Its pathway is carbohydrate degradation; glycolysis; pyruvate from D-glyceraldehyde 3-phosphate: step 3/5. Functionally, catalyzes the interconversion of 2-phosphoglycerate and 3-phosphoglycerate. The protein is 2,3-bisphosphoglycerate-dependent phosphoglycerate mutase of Methylocella silvestris (strain DSM 15510 / CIP 108128 / LMG 27833 / NCIMB 13906 / BL2).